The primary structure comprises 89 residues: Small ribosomal subunit protein uS15 (89 aa).

The protein belongs to the universal ribosomal protein uS15 family. In terms of assembly, part of the 30S ribosomal subunit. Forms a bridge to the 50S subunit in the 70S ribosome, contacting the 23S rRNA.

In terms of biological role, one of the primary rRNA binding proteins, it binds directly to 16S rRNA where it helps nucleate assembly of the platform of the 30S subunit by binding and bridging several RNA helices of the 16S rRNA. Its function is as follows. Forms an intersubunit bridge (bridge B4) with the 23S rRNA of the 50S subunit in the ribosome. The sequence is that of Small ribosomal subunit protein uS15 from Halalkalibacterium halodurans (strain ATCC BAA-125 / DSM 18197 / FERM 7344 / JCM 9153 / C-125) (Bacillus halodurans).